A 200-amino-acid polypeptide reads, in one-letter code: Small ribosomal subunit protein uS4 (200 aa).

The disordered stretch occupies residues 22–42 (TGKELEKRPYAPGPHGPGQRK). The 61-residue stretch at 92–152 (SRLDNIVYRL…EKSQNLSVVK (61 aa)) folds into the S4 RNA-binding domain.

This sequence belongs to the universal ribosomal protein uS4 family. As to quaternary structure, part of the 30S ribosomal subunit. Contacts protein S5. The interaction surface between S4 and S5 is involved in control of translational fidelity.

One of the primary rRNA binding proteins, it binds directly to 16S rRNA where it nucleates assembly of the body of the 30S subunit. Its function is as follows. With S5 and S12 plays an important role in translational accuracy. This is Small ribosomal subunit protein uS4 from Bacillus licheniformis (strain ATCC 14580 / DSM 13 / JCM 2505 / CCUG 7422 / NBRC 12200 / NCIMB 9375 / NCTC 10341 / NRRL NRS-1264 / Gibson 46).